Reading from the N-terminus, the 71-residue chain is Phosphatidylinositol N-acetylglucosaminyltransferase subunit Y (71 aa).

Position 1 (M1) is a topological domain, cytoplasmic. Residues F2 to L21 form a helical membrane-spanning segment. Topologically, residues Y22–S44 are lumenal. The chain crosses the membrane as a helical span at residues L45–L65. Residues K66 to N71 are Cytoplasmic-facing.

As to quaternary structure, component of the glycosylphosphatidylinositol-N-acetylglucosaminyltransferase (GPI-GnT) complex composed at least by PIGA, PIGC, PIGH, PIGP, PIGQ, PIGY and DPM2.

It localises to the endoplasmic reticulum membrane. It functions in the pathway glycolipid biosynthesis; glycosylphosphatidylinositol-anchor biosynthesis. Part of the glycosylphosphatidylinositol-N-acetylglucosaminyltransferase (GPI-GnT) complex that catalyzes the transfer of N-acetylglucosamine from UDP-N-acetylglucosamine to phosphatidylinositol and participates in the first step of GPI biosynthesis. May act by regulating the catalytic subunit PIGA. The chain is Phosphatidylinositol N-acetylglucosaminyltransferase subunit Y from Xenopus tropicalis (Western clawed frog).